Here is a 69-residue protein sequence, read N- to C-terminus: Cytochrome b-c1 complex subunit 6-1, mitochondrial (69 aa).

2 disulfide bridges follow: Cys-17–Cys-59 and Cys-31–Cys-45.

Belongs to the UQCRH/QCR6 family. In terms of assembly, component of the ubiquinol-cytochrome c oxidoreductase (cytochrome b-c1 complex, complex III, CIII), a multisubunit enzyme composed of 10 subunits. The complex is composed of 3 respiratory subunits cytochrome b (MT-CYB), cytochrome c1 (CYC1-1 or CYC1-2) and Rieske protein (UCR1-1 or UCR1-2), 2 core protein subunits MPPalpha1 (or MPPalpha2) and MPPB, and 5 low-molecular weight protein subunits QCR7-1 (or QCR7-2), UCRQ-1 (or UCRQ-2), QCR9, UCRY and probably QCR6-1 (or QCR6-2). The complex exists as an obligatory dimer and forms supercomplexes (SCs) in the inner mitochondrial membrane with NADH-ubiquinone oxidoreductase (complex I, CI), resulting in different assemblies (supercomplexes SCI(1)III(2) and SCI(2)III(4)).

It is found in the mitochondrion inner membrane. Component of the ubiquinol-cytochrome c oxidoreductase, a multisubunit transmembrane complex that is part of the mitochondrial electron transport chain which drives oxidative phosphorylation. The respiratory chain contains 3 multisubunit complexes succinate dehydrogenase (complex II, CII), ubiquinol-cytochrome c oxidoreductase (cytochrome b-c1 complex, complex III, CIII) and cytochrome c oxidase (complex IV, CIV), that cooperate to transfer electrons derived from NADH and succinate to molecular oxygen, creating an electrochemical gradient over the inner membrane that drives transmembrane transport and the ATP synthase. The cytochrome b-c1 complex catalyzes electron transfer from ubiquinol to cytochrome c, linking this redox reaction to translocation of protons across the mitochondrial inner membrane, with protons being carried across the membrane as hydrogens on the quinol. In the process called Q cycle, 2 protons are consumed from the matrix, 4 protons are released into the intermembrane space and 2 electrons are passed to cytochrome c. The protein is Cytochrome b-c1 complex subunit 6-1, mitochondrial (QCR6-1) of Arabidopsis thaliana (Mouse-ear cress).